We begin with the raw amino-acid sequence, 374 residues long: Chaperone protein DnaJ (374 aa).

The J domain maps to 5-70 (DYYKLLGVDR…EKRAGYDRYG (66 aa)). The CR-type zinc finger occupies 136 to 214 (GIQAPIHYVT…CNGSGRRRDE (79 aa)). Zn(2+) contacts are provided by cysteine 149, cysteine 152, cysteine 166, cysteine 169, cysteine 188, cysteine 191, cysteine 202, and cysteine 205. CXXCXGXG motif repeat units follow at residues 149-156 (CDMCQGRG), 166-173 (CHTCQGSG), 188-195 (CTTCYGEG), and 202-209 (CKKCNGSG).

The protein belongs to the DnaJ family. Homodimer. Zn(2+) serves as cofactor.

The protein resides in the cytoplasm. Participates actively in the response to hyperosmotic and heat shock by preventing the aggregation of stress-denatured proteins and by disaggregating proteins, also in an autonomous, DnaK-independent fashion. Unfolded proteins bind initially to DnaJ; upon interaction with the DnaJ-bound protein, DnaK hydrolyzes its bound ATP, resulting in the formation of a stable complex. GrpE releases ADP from DnaK; ATP binding to DnaK triggers the release of the substrate protein, thus completing the reaction cycle. Several rounds of ATP-dependent interactions between DnaJ, DnaK and GrpE are required for fully efficient folding. Also involved, together with DnaK and GrpE, in the DNA replication of plasmids through activation of initiation proteins. The sequence is that of Chaperone protein DnaJ from Wolbachia sp. subsp. Brugia malayi (strain TRS).